The following is a 686-amino-acid chain: MAM domain-containing protein 2 (686 aa).

Residues 1-18 (MLLRGVLLALQALQLAGA) form the signal peptide. MAM domains follow at residues 24-169 (GSCA…YCIE), 168-329 (IECD…HCQN), 340-498 (ASCN…SCSS), and 507-666 (GECT…PCGE). N134 and N329 each carry an N-linked (GlcNAc...) asparagine glycan. 2 disordered regions span residues 521–543 (EKRN…TGPK) and 665–686 (GEME…EIEY). N-linked (GlcNAc...) asparagine glycosylation is present at N524.

In terms of processing, O-glycosylated.

The protein resides in the secreted. It is found in the extracellular space. The protein localises to the extracellular matrix. The chain is MAM domain-containing protein 2 (MAMDC2) from Homo sapiens (Human).